We begin with the raw amino-acid sequence, 521 residues long: Cytokinin dehydrogenase 9 (521 aa).

The first 22 residues, 1–22 (MRPSLLQYLKLLLLLALGGVTT), serve as a signal peptide directing secretion. An N-linked (GlcNAc...) asparagine glycan is attached at Asn57. Residues 59–237 (SSFPPVAVLH…TRARIPLEPA (179 aa)) enclose the FAD-binding PCMH-type domain. FAD is bound by residues Ala95, Gly97, and Gly99. His100 carries the pros-8alpha-FAD histidine modification. Residues Ser101, Gln105, Asp161, Thr166, Ser172, Val176, and Ile227 each contribute to the FAD site. N-linked (GlcNAc...) asparagine glycans are attached at residues Asn278, Asn412, and Asn418. FAD is bound at residue Tyr469. A glycan (N-linked (GlcNAc...) asparagine) is linked at Asn472. Gln507 lines the FAD pocket.

It belongs to the oxygen-dependent FAD-linked oxidoreductase family. Monomer. FAD is required as a cofactor. As to expression, expressed in inflorescence meristems.

The protein localises to the secreted. It is found in the extracellular space. It localises to the cytoplasm. The protein resides in the cytosol. Its subcellular location is the nucleus. It carries out the reaction N(6)-dimethylallyladenine + A + H2O = 3-methyl-2-butenal + adenine + AH2. In terms of biological role, catalyzes the oxidation of cytokinins, a family of N(6)-substituted adenine derivatives that are plant hormones, where the substituent is an isopentenyl group. Possesses cytokinin oxidase activity toward trans-zeatin (tZ) and N6-(2-isopentenyl)adenine (2iP) in vitro. Functions as a primary strigolactone-responsive gene to regulate rice tillering, plant height, and panicle size, likely via a secondary response gene, RR5, which encodes a cytokinin-inducible rice type-A response regulator that seems to act as negative regulator of the cytokinin signaling. This is Cytokinin dehydrogenase 9 from Oryza sativa subsp. japonica (Rice).